The sequence spans 281 residues: Phosphate import ATP-binding protein PstB (281 aa).

The ABC transporter domain maps to 33–276; that stretch reads FKIENLSLWY…PQLKRTRDYI (244 aa). Position 67–74 (67–74) interacts with ATP; it reads GPSGCGKS.

The protein belongs to the ABC transporter superfamily. Phosphate importer (TC 3.A.1.7) family. The complex is composed of two ATP-binding proteins (PstB), two transmembrane proteins (PstC and PstA) and a solute-binding protein (PstS).

Its subcellular location is the cell membrane. The enzyme catalyses phosphate(out) + ATP + H2O = ADP + 2 phosphate(in) + H(+). Its function is as follows. Part of the ABC transporter complex PstSACB involved in phosphate import. Responsible for energy coupling to the transport system. The chain is Phosphate import ATP-binding protein PstB from Mycoplasma mobile (strain ATCC 43663 / 163K / NCTC 11711) (Mesomycoplasma mobile).